We begin with the raw amino-acid sequence, 836 residues long: Translation initiation factor IF-2 (836 aa).

Residues 1-17 (MLRLMRQKKLSIQRRTK) are compositionally biased toward basic residues. 2 disordered regions span residues 1–43 (MLRL…RTVK) and 83–240 (AAKK…KGAA). Low complexity predominate over residues 18–27 (TTVSSTTTGG). The span at 83 to 153 (AAKKEADEKV…AAEEAKRYAE (71 aa)) shows a compositional bias: basic and acidic residues. The segment covering 154 to 167 (ADDSDNESSSEDYS) has biased composition (acidic residues). Residues 192–202 (RGKNKVAKAKK) show a composition bias toward basic residues. Residues 203 to 229 (GGRDDENSKNSKNERESNRKNQKDAKF) are compositionally biased toward basic and acidic residues. Residues 335–505 (TRAPVVTIMG…LLQSEVLELT (171 aa)) form the tr-type G domain. A G1 region spans residues 344–351 (GHVDHGKT). 344 to 351 (GHVDHGKT) is a GTP binding site. The interval 369 to 373 (GITQH) is G2. The G3 stretch occupies residues 391–394 (DTPG). GTP contacts are provided by residues 391–395 (DTPGH) and 445–448 (NKID). The tract at residues 445–448 (NKID) is G4. Residues 481 to 483 (SAK) form a G5 region.

Belongs to the TRAFAC class translation factor GTPase superfamily. Classic translation factor GTPase family. IF-2 subfamily.

The protein localises to the cytoplasm. In terms of biological role, one of the essential components for the initiation of protein synthesis. Protects formylmethionyl-tRNA from spontaneous hydrolysis and promotes its binding to the 30S ribosomal subunits. Also involved in the hydrolysis of GTP during the formation of the 70S ribosomal complex. This chain is Translation initiation factor IF-2, found in Haemophilus influenzae (strain PittEE).